Consider the following 637-residue polypeptide: Biosynthetic arginine decarboxylase (637 aa).

At Lys-101 the chain carries N6-(pyridoxal phosphate)lysine. 286–296 (FDVGGGLAVDY) lines the substrate pocket.

This sequence belongs to the Orn/Lys/Arg decarboxylase class-II family. SpeA subfamily. Mg(2+) serves as cofactor. Pyridoxal 5'-phosphate is required as a cofactor.

It catalyses the reaction L-arginine + H(+) = agmatine + CO2. It participates in amine and polyamine biosynthesis; agmatine biosynthesis; agmatine from L-arginine: step 1/1. Catalyzes the biosynthesis of agmatine from arginine. This Shewanella sp. (strain ANA-3) protein is Biosynthetic arginine decarboxylase.